A 913-amino-acid polypeptide reads, in one-letter code: MDYKETLNLPQTNFQMKANLVQKEPNMLKYWEEKEIYKKTLETREGAPTYLLHDGPPYANGDIHLGTAMNKILKDFVTRYKTMRGYRVPYVPGWDTHGLPIEHRVTTTLGEEAKKKSPVEIRKLCKEFALKYVDIQREEFKRLGVKGDWEHPYITLTPDYEYHILDVFKTLVENGNVYRGNKPVYWCPTCRTALAEAEIEYHDHESPSIYVKFQMVDQPDTYVVIWTTTPWTIPANVAIALHPEYEYLKIKVGNEYWIVADGLLQKFASETGIEFQVTEKFLGKTLEGKLTKHPLYDRTSVIVLADYVTLEDGTGCVHTAPGHGEEDYQTGLKYNLPILSPVDDEGKFTKEAGKYEGLKIWDANKVVVEDLEKAGALIKFGKISHSYPHCWRCKGPVMFRATPQWFISVNKNNLRGKVLEQIKKVKWYPSWGENRITAMVQERPDWTISRQRVWGVPIPAVKCKSCDEVTLDPKVIEHFANIVKEKGTDAWFELDIKELIPSDFSCPKCGSKEFEKTYDTLDVWIDSGCSWEAVIRSKGEKFPVDLYLEGDDQHRGWFQSSIFLATAKTGNAPFKTVVTHGFIKDEQGRKMSKSLGNVIDPMEIVNKYGADILRLWVASTDFFDNIRVGKNIIEQQVEVYRKLRNTLRYLLSNLYDFTENDILPYEKLLPLDKWALGRLQKYIEQVTQYYEEFEYSKVYNATVKYCTTELSSIYLDILKDRLYVEAKDSIYRRSAQTVLYYILEALIKILAPIMPFTAEEAYQESPLKKYESVHLENWPEVRKEFINENLLEEFQQLLLVRDDVLKALENARSSDVIGHSLDAHVKIEPKNSEIGQLLEKYADMLEDFFIVSKVSILNELSDGINGQLVTVLVEHAEGQKCQRCWKYHPDTGKDENHPETCPRCSAVLRGERK.

The short motif at P57–T67 is the 'HIGH' region element. E549 is an L-isoleucyl-5'-AMP binding site. The 'KMSKS' region motif lies at K590–S594. K593 is a binding site for ATP. Positions 881, 884, 901, and 904 each coordinate Zn(2+).

The protein belongs to the class-I aminoacyl-tRNA synthetase family. IleS type 1 subfamily. Monomer. Requires Zn(2+) as cofactor.

The protein resides in the cytoplasm. The catalysed reaction is tRNA(Ile) + L-isoleucine + ATP = L-isoleucyl-tRNA(Ile) + AMP + diphosphate. Its function is as follows. Catalyzes the attachment of isoleucine to tRNA(Ile). As IleRS can inadvertently accommodate and process structurally similar amino acids such as valine, to avoid such errors it has two additional distinct tRNA(Ile)-dependent editing activities. One activity is designated as 'pretransfer' editing and involves the hydrolysis of activated Val-AMP. The other activity is designated 'posttransfer' editing and involves deacylation of mischarged Val-tRNA(Ile). This is Isoleucine--tRNA ligase from Fervidobacterium nodosum (strain ATCC 35602 / DSM 5306 / Rt17-B1).